The chain runs to 489 residues: 2-(3-amino-3-carboxypropyl)histidine synthase subunit 2 (489 aa).

Residue Met-1 is modified to N-acetylmethionine. Ser-7 is subject to Phosphoserine. Positions 89, 110, and 341 each coordinate [4Fe-4S] cluster. A Phosphoserine modification is found at Ser-446. A Phosphothreonine modification is found at Thr-467. Ser-488 carries the phosphoserine modification.

This sequence belongs to the DPH1/DPH2 family. DPH2 subfamily. As to quaternary structure, component of the 2-(3-amino-3-carboxypropyl)histidine synthase complex composed of DPH1, DPH2, DPH3 and a NADH-dependent reductase. Interacts with DPH1. [4Fe-4S] cluster serves as cofactor.

The protein operates within protein modification; peptidyl-diphthamide biosynthesis. Required for the first step of diphthamide biosynthesis, a post-translational modification of histidine which occurs in elongation factor 2. DPH1 and DPH2 transfer a 3-amino-3-carboxypropyl (ACP) group from S-adenosyl-L-methionine (SAM) to a histidine residue, the reaction is assisted by a reduction system comprising DPH3 and a NADH-dependent reductase. Facilitates the reduction of the catalytic iron-sulfur cluster found in the DPH1 subunit. This is 2-(3-amino-3-carboxypropyl)histidine synthase subunit 2 (Dph2) from Mus musculus (Mouse).